The primary structure comprises 282 residues: Bifunctional protein FolD (282 aa).

Residues 165–167 (GRS) and Ser-190 contribute to the NADP(+) site.

It belongs to the tetrahydrofolate dehydrogenase/cyclohydrolase family. Homodimer.

The enzyme catalyses (6R)-5,10-methylene-5,6,7,8-tetrahydrofolate + NADP(+) = (6R)-5,10-methenyltetrahydrofolate + NADPH. It carries out the reaction (6R)-5,10-methenyltetrahydrofolate + H2O = (6R)-10-formyltetrahydrofolate + H(+). Its pathway is one-carbon metabolism; tetrahydrofolate interconversion. Functionally, catalyzes the oxidation of 5,10-methylenetetrahydrofolate to 5,10-methenyltetrahydrofolate and then the hydrolysis of 5,10-methenyltetrahydrofolate to 10-formyltetrahydrofolate. This chain is Bifunctional protein FolD, found in Macrococcus caseolyticus (strain JCSC5402) (Macrococcoides caseolyticum).